Here is a 217-residue protein sequence, read N- to C-terminus: Probable transaldolase (217 aa).

Lys-83 serves as the catalytic Schiff-base intermediate with substrate.

It belongs to the transaldolase family. Type 3B subfamily.

It is found in the cytoplasm. It carries out the reaction D-sedoheptulose 7-phosphate + D-glyceraldehyde 3-phosphate = D-erythrose 4-phosphate + beta-D-fructose 6-phosphate. It functions in the pathway carbohydrate degradation; pentose phosphate pathway; D-glyceraldehyde 3-phosphate and beta-D-fructose 6-phosphate from D-ribose 5-phosphate and D-xylulose 5-phosphate (non-oxidative stage): step 2/3. In terms of biological role, transaldolase is important for the balance of metabolites in the pentose-phosphate pathway. This chain is Probable transaldolase, found in Hydrogenobaculum sp. (strain Y04AAS1).